We begin with the raw amino-acid sequence, 1192 residues long: Protein argonaute 13 (1192 aa).

A PAZ domain is found at 183-296 (TVIQFVEEFL…LPMEVCKIVE (114 aa)). Residues 472–770 (LLIVILLEVS…AASHAHCCIK (299 aa)) enclose the Piwi domain.

It belongs to the argonaute family. Ago subfamily.

In terms of biological role, probably involved in the RNA silencing pathway. May bind to short RNAs such as microRNAs (miRNAs) or short interfering RNAs (siRNAs), and represses the translation of mRNAs which are complementary to them. This is Protein argonaute 13 (AGO13) from Oryza sativa subsp. japonica (Rice).